Reading from the N-terminus, the 528-residue chain is Purine-cytosine permease FCY21 (528 aa).

The Cytoplasmic portion of the chain corresponds to Met1–Met90. Ser43 is subject to Phosphoserine. At Thr46 the chain carries Phosphothreonine. The chain crosses the membrane as a helical span at residues Trp91–Phe111. Topologically, residues Asp112–Ser118 are extracellular. A helical membrane pass occupies residues Val119 to Phe139. Over Gly140 to Arg161 the chain is Cytoplasmic. Residues Ile162–Ser182 form a helical membrane-spanning segment. Topologically, residues Ser183–Trp198 are extracellular. A helical membrane pass occupies residues Ala199–Ile219. The Cytoplasmic portion of the chain corresponds to His220–Ala221. The helical transmembrane segment at Tyr222–Ala242 threads the bilayer. At Arg243–Gly260 the chain is on the extracellular side. The chain crosses the membrane as a helical span at residues Asn261 to Ala281. At Asp282 to Lys295 the chain is on the cytoplasmic side. The helical transmembrane segment at Ile296–Ala316 threads the bilayer. The Extracellular portion of the chain corresponds to Ala317 to Leu340. The helical transmembrane segment at Thr341–Leu361 threads the bilayer. Over Ser362–Val393 the chain is Cytoplasmic. The helical transmembrane segment at Ile394 to Phe414 threads the bilayer. At Ser415 to Thr416 the chain is on the extracellular side. The helical transmembrane segment at Phe417–Cys437 threads the bilayer. Over Ser438–Arg460 the chain is Cytoplasmic. The helical transmembrane segment at Leu461–Gly481 threads the bilayer. At Met482–Arg493 the chain is on the extracellular side. Residues Leu494–Val514 form a helical membrane-spanning segment. At Tyr515 to Arg528 the chain is on the cytoplasmic side.

This sequence belongs to the purine-cytosine permease (2.A.39) family.

Its subcellular location is the membrane. In terms of biological role, probable purine-cytosine permease. This is Purine-cytosine permease FCY21 (FCY21) from Saccharomyces cerevisiae (strain ATCC 204508 / S288c) (Baker's yeast).